A 363-amino-acid chain; its full sequence is G-protein coupled receptor 78 (363 aa).

The Extracellular segment spans residues 1–7 (MGPGEAL). Residues 8–28 (LAGLLVMVLAVALLSNALVLL) form a helical membrane-spanning segment. Topologically, residues 29–47 (CCAYSAELRTRASGVLLVN) are cytoplasmic. A helical membrane pass occupies residues 48–68 (LSLGHLLLAALDMPFTLLGVM). At 69–80 (RGRTPSAPGACQ) the chain is on the extracellular side. Cys79 and Cys156 form a disulfide bridge. Residues 81–101 (VIGFLDTFLASNAALSVAALS) traverse the membrane as a helical segment. Over 102-122 (ADQWLAVGFPLRYAGRLRPRY) the chain is Cytoplasmic. Residues 123 to 143 (AGLLLGCAWGQSLAFSGAALG) traverse the membrane as a helical segment. At 144–168 (CSWLGYSSAFASCSLRLPPEPERPR) the chain is on the extracellular side. A helical membrane pass occupies residues 169–189 (FAAFTATLHAVGFVLPLAVLC). Residues 190–242 (LTSLQVHRVARRHCQRMDTVTMKALALLADLHPSVRQRCLIQQKRRRHRATRK) lie on the Cytoplasmic side of the membrane. Residues 243–263 (IGIAIATFLICFAPYVMTRLA) traverse the membrane as a helical segment. Topologically, residues 264–277 (ELVPFVTVNAQWGI) are extracellular. Residues 278–297 (LSKCLTYSKAVADPFTYSLL) form a helical membrane-spanning segment. Over 298–363 (RRPFRQVLAG…ENDSCLQQTH (66 aa)) the chain is Cytoplasmic. A disordered region spans residues 340–363 (TPRPASTHNGSVDTENDSCLQQTH). Residues 343-363 (PASTHNGSVDTENDSCLQQTH) show a composition bias toward polar residues.

This sequence belongs to the G-protein coupled receptor 1 family. In terms of tissue distribution, high level of expression in placenta. Expressed throughout the brain at low level. No expression detected in skeletal muscle, lung, heart, liver, pancreas, or kidney.

It localises to the cell membrane. Orphan receptor. Displays a significant level of constitutive activity. Its effect is mediated by G(s)-alpha protein that stimulate adenylate cyclase, resulting in an elevation of intracellular cAMP. The polypeptide is G-protein coupled receptor 78 (GPR78) (Homo sapiens (Human)).